A 327-amino-acid chain; its full sequence is E3 ubiquitin-protein ligase SINAT4 (327 aa).

Positions 1-27 (METDSMECVSSTGNEIHQNGNGHQSYQ) are disordered. Polar residues predominate over residues 8–27 (CVSSTGNEIHQNGNGHQSYQ). Residues 64–100 (CPVCTYSMYPPIHQCHNGHTLCSTCKVRVHNRCPTCR) form an RING-type zinc finger. The SBD stretch occupies residues 114 to 307 (VAESLELPCK…KELKLRVTGK (194 aa)). Residues 117-177 (SLELPCKFYN…LVAHLRDDHK (61 aa)) form an SIAH-type zinc finger. 8 residues coordinate Zn(2+): cysteine 122, cysteine 129, histidine 141, cysteine 145, cysteine 152, cysteine 159, histidine 171, and histidine 176.

Belongs to the SINA (Seven in absentia) family. In terms of assembly, interacts with SINAT6. Interacts with WAV3. Interacts with FREE1. Interacts with ELC/VPS23A.

The protein localises to the endosome. It localises to the multivesicular body. The protein resides in the cytoplasmic vesicle. It is found in the autophagosome. It carries out the reaction S-ubiquitinyl-[E2 ubiquitin-conjugating enzyme]-L-cysteine + [acceptor protein]-L-lysine = [E2 ubiquitin-conjugating enzyme]-L-cysteine + N(6)-ubiquitinyl-[acceptor protein]-L-lysine.. Its pathway is protein modification; protein ubiquitination. In terms of biological role, E3 ubiquitin-protein ligase that mediates ubiquitination and subsequent proteasomal degradation of target proteins. E3 ubiquitin ligases accept ubiquitin from an E2 ubiquitin-conjugating enzyme in the form of a thioester and then directly transfers the ubiquitin to targeted substrates. It probably triggers the ubiquitin-mediated degradation of different substrates. Modulates directly the ubiquitination and proteasomal-dependent degradation of FREE1, a component of the ESCRT-I complex. Modulates directly the ubiquitination and proteasomal-dependent degradation of ELC/VPS23A, a component of the ESCRT-I complex. This Arabidopsis thaliana (Mouse-ear cress) protein is E3 ubiquitin-protein ligase SINAT4.